Reading from the N-terminus, the 299-residue chain is Acetylglutamate kinase (299 aa).

Residues 72 to 73, arginine 94, and asparagine 196 contribute to the substrate site; that span reads GG.

This sequence belongs to the acetylglutamate kinase family. ArgB subfamily.

Its subcellular location is the cytoplasm. It carries out the reaction N-acetyl-L-glutamate + ATP = N-acetyl-L-glutamyl 5-phosphate + ADP. The protein operates within amino-acid biosynthesis; L-arginine biosynthesis; N(2)-acetyl-L-ornithine from L-glutamate: step 2/4. Catalyzes the ATP-dependent phosphorylation of N-acetyl-L-glutamate. The sequence is that of Acetylglutamate kinase from Paraburkholderia phymatum (strain DSM 17167 / CIP 108236 / LMG 21445 / STM815) (Burkholderia phymatum).